The primary structure comprises 394 residues: Myb-like protein R (394 aa).

2 helical membrane passes run 11 to 31 (IGAQ…EFII) and 99 to 119 (FFIG…LIIF). The region spanning 325-377 (GNWSLDEQKALMVEVSTLGNKSEINWFFISKQLFLKGISRNARECQRKHESIQ) is the Myb-like domain.

It localises to the membrane. This is Myb-like protein R (mybR) from Dictyostelium discoideum (Social amoeba).